The following is a 605-amino-acid chain: MALPSQEVSRTRNFCIIAHIDHGKSTLADRLLEVTHTLDRTQMSSAQVLDDMDLEKERGITIKSHAVQMKFKAEDGQEYILNLIDTPGHVDFSYEVSRSLAACEGALLIVDATQGVEAQTIANLYLAIEAGLEIIPVMNKIDLPSSDVEGVASQIIDLIGVERDEILQVSAKAGTGIDKLMDAIIARIPSPKDNKHLPLRALIFDSVFDPYRGAVVYLRIVDGVLNKGDRVRFFANDHIYTADEIGTMSLKRQPKETLASGNVGYLICSIKDVKDAKVGDTVTHADTPASEPLSGYKDVKPMVYSGLYPVNSNEFEDLRESLEKLSLNDASLVYTPETSVALGFGFRCGFLGLLHMEIIQERLEREYGVNIITTVPNVEYRVILTNSDVIEVDNPSKMPDTTKINHVEEPYVSMQIITLSEYIGNIMKLGMERRGEYKNTDYLDSSRVIMHFEFPLGEIVFDFHDKLKSISKGYASMDYEYIGYRESDLVKLDVLLNGEPVDALSIIVHRSKAYEWGRKLCQKLKGIIPKQMYEVAIQAAIGSRVISRETISAMRKNVLAKCYGGDISRKRKLLEKQKEGKKRMKQVGRVEVPQEAFLAILNIDE.

The region spanning 9–192 (SRTRNFCIIA…AIIARIPSPK (184 aa)) is the tr-type G domain. GTP is bound by residues 21 to 26 (DHGKST) and 139 to 142 (NKID).

The protein belongs to the TRAFAC class translation factor GTPase superfamily. Classic translation factor GTPase family. LepA subfamily.

It localises to the cell inner membrane. It catalyses the reaction GTP + H2O = GDP + phosphate + H(+). Its function is as follows. Required for accurate and efficient protein synthesis under certain stress conditions. May act as a fidelity factor of the translation reaction, by catalyzing a one-codon backward translocation of tRNAs on improperly translocated ribosomes. Back-translocation proceeds from a post-translocation (POST) complex to a pre-translocation (PRE) complex, thus giving elongation factor G a second chance to translocate the tRNAs correctly. Binds to ribosomes in a GTP-dependent manner. This chain is Elongation factor 4, found in Chlorobium limicola (strain DSM 245 / NBRC 103803 / 6330).